Here is a 100-residue protein sequence, read N- to C-terminus: Large ribosomal subunit protein uL23 (100 aa).

It belongs to the universal ribosomal protein uL23 family. In terms of assembly, part of the 50S ribosomal subunit. Contacts protein L29, and trigger factor when it is bound to the ribosome.

In terms of biological role, one of the early assembly proteins it binds 23S rRNA. One of the proteins that surrounds the polypeptide exit tunnel on the outside of the ribosome. Forms the main docking site for trigger factor binding to the ribosome. This Synechococcus sp. (strain WH7803) protein is Large ribosomal subunit protein uL23.